The chain runs to 180 residues: Adenine phosphoribosyltransferase (180 aa).

Residue Ala2 is modified to N-acetylalanine. Ser15 and Ser30 each carry phosphoserine. Tyr60 carries the phosphotyrosine modification. Ser66 carries the post-translational modification Phosphoserine. Residue Lys114 is modified to N6-acetyllysine. Thr135 bears the Phosphothreonine mark.

It belongs to the purine/pyrimidine phosphoribosyltransferase family. In terms of assembly, homodimer.

The protein resides in the cytoplasm. The catalysed reaction is AMP + diphosphate = 5-phospho-alpha-D-ribose 1-diphosphate + adenine. Its pathway is purine metabolism; AMP biosynthesis via salvage pathway; AMP from adenine: step 1/1. Functionally, catalyzes a salvage reaction resulting in the formation of AMP, that is energically less costly than de novo synthesis. In Dipodillus campestris (North African gerbil), this protein is Adenine phosphoribosyltransferase.